Here is a 321-residue protein sequence, read N- to C-terminus: MNTEATHDQNEAQTTGVRLRNAREQLGLSQQAVAERLCLKVSTVRDIEEDKAPSDLASTFLRGYIRSYARLVHVPEEELLPGLEKQAPLRAAKVAPMQNFSLGKRRKKRDGWLMSFTWLVLFVVVGLTGAWWWQNHKAQQEEITTMADQSTAELNADKDSGQGVQLDTRAAASQDTTPAETAPAAPVDSTAAATQNTVVAPSQANVDTAATSATATETSSALPTDQAGVAAPAADSNALVMNFTADCWLEVTDATGKKLFSGMQRKDGNLNLTGQAPYKLKIGAPAAVQIQYQGKPVDLSRFIRTNQVARLTINAEPTSAQ.

The Cytoplasmic segment spans residues 1–111; the sequence is MNTEATHDQN…LGKRRKKRDG (111 aa). An HTH cro/C1-type domain is found at 19–71; the sequence is LRNAREQLGLSQQAVAERLCLKVSTVRDIEEDKAPSDLASTFLRGYIRSYARL. A DNA-binding region (H-T-H motif) is located at residues 30–49; that stretch reads QQAVAERLCLKVSTVRDIEE. A helical; Signal-anchor for type II membrane protein transmembrane segment spans residues 112 to 132; that stretch reads WLMSFTWLVLFVVVGLTGAWW. Residues 133–321 lie on the Periplasmic side of the membrane; sequence WQNHKAQQEE…TINAEPTSAQ (189 aa). Residues 167 to 190 are disordered; the sequence is DTRAAASQDTTPAETAPAAPVDST. The segment covering 176–190 has biased composition (low complexity); that stretch reads TTPAETAPAAPVDST.

The protein belongs to the RodZ family.

It localises to the cell inner membrane. Cytoskeletal protein that is involved in cell-shape control through regulation of the length of the long axis. In Salmonella arizonae (strain ATCC BAA-731 / CDC346-86 / RSK2980), this protein is Cytoskeleton protein RodZ.